The following is a 116-amino-acid chain: Endoribonuclease EndoA (116 aa).

Belongs to the PemK/MazF family. Homodimer. Forms a complex with antitoxin EndoAI in which the toxin activity is inhibited. One dimer binds a ssRNA substrate, forms a heterohexamer composed of alternating toxin and antitoxin homodimers which inhibits the endoribonuclease activity. Antitoxin prevents RNA binding to the endoribonuclease.

In terms of biological role, toxic component of a type II toxin-antitoxin (TA) system. Specific for 5'-UACAU-3' sequences, cleaving after the first U. Yields cleavage products with 3' phosphate and 5' hydroxyl groups. Cannot digest substrate with a UUdUACAUAA cleavage site. Overexpression is toxic for cell growth (shown in E.coli), probably by inhibiting protein synthesis through the cleavage of single-stranded RNA. The toxicity is reversed by the antitoxin EndoAI. Toxin activity cannot be inhibited by MazE from E.coli. The EndoA-EndoAI complex does not seem to bind its own promoter. The protein is Endoribonuclease EndoA of Bacillus subtilis (strain 168).